We begin with the raw amino-acid sequence, 366 residues long: Holliday junction branch migration complex subunit RuvB (366 aa).

Residues 1–50 (MAIISSKKQPPEPNGEPKQRRESAKAPSTENILKPEAAIDEQEQQEEGIR) are disordered. The segment at 13-210 (PNGEPKQRRE…FGLIQKLRFY (198 aa)) is large ATPase domain (RuvB-L). Over residues 15 to 24 (GEPKQRRESA) the composition is skewed to basic and acidic residues. Residues I49, R50, G91, K94, T95, T96, 157 to 159 (EDY), R200, Y210, and R247 each bind ATP. Residue T95 participates in Mg(2+) binding. The small ATPAse domain (RuvB-S) stretch occupies residues 211 to 281 (EVDELTQIVL…IASEALQLFQ (71 aa)). The head domain (RuvB-H) stretch occupies residues 284–366 (PCGLDWTDRQ…TPPNEQLSLL (83 aa)). 2 residues coordinate DNA: R339 and R344.

Belongs to the RuvB family. As to quaternary structure, homohexamer. Forms an RuvA(8)-RuvB(12)-Holliday junction (HJ) complex. HJ DNA is sandwiched between 2 RuvA tetramers; dsDNA enters through RuvA and exits via RuvB. An RuvB hexamer assembles on each DNA strand where it exits the tetramer. Each RuvB hexamer is contacted by two RuvA subunits (via domain III) on 2 adjacent RuvB subunits; this complex drives branch migration. In the full resolvosome a probable DNA-RuvA(4)-RuvB(12)-RuvC(2) complex forms which resolves the HJ.

It localises to the cytoplasm. The enzyme catalyses ATP + H2O = ADP + phosphate + H(+). In terms of biological role, the RuvA-RuvB-RuvC complex processes Holliday junction (HJ) DNA during genetic recombination and DNA repair, while the RuvA-RuvB complex plays an important role in the rescue of blocked DNA replication forks via replication fork reversal (RFR). RuvA specifically binds to HJ cruciform DNA, conferring on it an open structure. The RuvB hexamer acts as an ATP-dependent pump, pulling dsDNA into and through the RuvAB complex. RuvB forms 2 homohexamers on either side of HJ DNA bound by 1 or 2 RuvA tetramers; 4 subunits per hexamer contact DNA at a time. Coordinated motions by a converter formed by DNA-disengaged RuvB subunits stimulates ATP hydrolysis and nucleotide exchange. Immobilization of the converter enables RuvB to convert the ATP-contained energy into a lever motion, pulling 2 nucleotides of DNA out of the RuvA tetramer per ATP hydrolyzed, thus driving DNA branch migration. The RuvB motors rotate together with the DNA substrate, which together with the progressing nucleotide cycle form the mechanistic basis for DNA recombination by continuous HJ branch migration. Branch migration allows RuvC to scan DNA until it finds its consensus sequence, where it cleaves and resolves cruciform DNA. This chain is Holliday junction branch migration complex subunit RuvB, found in Nostoc punctiforme (strain ATCC 29133 / PCC 73102).